We begin with the raw amino-acid sequence, 111 residues long: Putative single-stranded DNA-binding protein ycf41 (111 aa).

The 98-residue stretch at 1–98 (MNKCNLLVQI…FSTSRIFKYK (98 aa)) folds into the SSB domain.

It localises to the plastid. It is found in the chloroplast. The protein is Putative single-stranded DNA-binding protein ycf41 (ycf41) of Porphyra purpurea (Red seaweed).